The primary structure comprises 256 residues: DNA repair protein RecO (256 aa).

This sequence belongs to the RecO family.

Functionally, involved in DNA repair and RecF pathway recombination. This is DNA repair protein RecO from Anaeromyxobacter sp. (strain Fw109-5).